A 512-amino-acid polypeptide reads, in one-letter code: Na(+)/H(+) antiporter NhaB (512 aa).

The next 11 helical transmembrane spans lie at 28-48 (FLIINPLVFIFQPFMAGWLLV), 52-72 (IFTLAMALKCYPLLPGGLLAI), 97-117 (LLLMFMVAGIYFMKQLLLFIF), 144-164 (FLDALTVVAVVISVAIGFYGI), 201-221 (LMMHAGVGTALGGVMTMVGEP), 237-257 (FFLRVAPVSVPVFICGMLTCF), 296-330 (LALIAQGIIGAWLIFALAFHLAEVGLIGLSVIILA), 347-367 (TEALPFTALLAVFFAIVAVII), 390-410 (LFYLFNGLLSSISDNVFVGSV), 446-466 (ATPNGQAAFLFLLTSALAPLI), and 474-494 (VWMALPYTVVLTLVGLLCVKF).

The protein belongs to the NhaB Na(+)/H(+) (TC 2.A.34) antiporter family.

The protein localises to the cell inner membrane. It catalyses the reaction 2 Na(+)(in) + 3 H(+)(out) = 2 Na(+)(out) + 3 H(+)(in). Functionally, na(+)/H(+) antiporter that extrudes sodium in exchange for external protons. The polypeptide is Na(+)/H(+) antiporter NhaB (Enterobacter sp. (strain 638)).